Consider the following 181-residue polypeptide: Adenine phosphoribosyltransferase (181 aa).

Belongs to the purine/pyrimidine phosphoribosyltransferase family. In terms of assembly, homodimer.

The protein resides in the cytoplasm. The catalysed reaction is AMP + diphosphate = 5-phospho-alpha-D-ribose 1-diphosphate + adenine. It participates in purine metabolism; AMP biosynthesis via salvage pathway; AMP from adenine: step 1/1. Functionally, catalyzes a salvage reaction resulting in the formation of AMP, that is energically less costly than de novo synthesis. This is Adenine phosphoribosyltransferase from Shewanella woodyi (strain ATCC 51908 / MS32).